A 107-amino-acid chain; its full sequence is Large ribosomal subunit protein uL24 (107 aa).

Belongs to the universal ribosomal protein uL24 family. Part of the 50S ribosomal subunit.

One of two assembly initiator proteins, it binds directly to the 5'-end of the 23S rRNA, where it nucleates assembly of the 50S subunit. Functionally, one of the proteins that surrounds the polypeptide exit tunnel on the outside of the subunit. The protein is Large ribosomal subunit protein uL24 of Natranaerobius thermophilus (strain ATCC BAA-1301 / DSM 18059 / JW/NM-WN-LF).